A 292-amino-acid polypeptide reads, in one-letter code: Cyclic dipurine nucleotide synthase (292 aa).

ATP is bound at residue glutamine 47. A GTP-binding site is contributed by glycine 48–asparagine 52. Positions 61 and 63 each coordinate Mg(2+). Residues aspartate 63, asparagine 121–lysine 122, and aspartate 136 each bind ATP. Residue aspartate 136 coordinates Mg(2+). GTP is bound by residues lysine 197 and serine 216.

Belongs to the CD-NTase family. E01 subfamily. It depends on Mg(2+) as a cofactor.

It catalyses the reaction 2 ATP = 3',3'-c-di-AMP + 2 diphosphate. The enzyme catalyses 2 GTP = 3',3'-c-di-GMP + 2 diphosphate. It carries out the reaction GTP + ATP = 3',3'-cGAMP + 2 diphosphate. Functionally, cyclic nucleotide synthase (second messenger synthase) of a CBASS antivirus system. CBASS (cyclic oligonucleotide-based antiphage signaling system) provides immunity against bacteriophage. The CD-NTase protein synthesizes cyclic nucleotides in response to infection; these serve as specific second messenger signals. The signals activate a diverse range of effectors, leading to bacterial cell death and thus abortive phage infection. A type I-A(GA) CBASS system. In terms of biological role, cyclic dinucleotide synthase that catalyzes the synthesis of 3'3'-cyclic GMP-AMP (cGAMP) from GTP and ATP, and of c-di-AMP and c-di-GMP, that are second messengers for cell signal transduction. The polypeptide is Cyclic dipurine nucleotide synthase (Elizabethkingia meningoseptica (Chryseobacterium meningosepticum)).